The following is a 130-amino-acid chain: Small ribosomal subunit protein bS6 (130 aa).

The tract at residues 99–130 (ASPMVKAKDERRERHDFASEANDDSEAGDSEE) is disordered. Basic and acidic residues predominate over residues 104–116 (KAKDERRERHDFA). Over residues 119-130 (ANDDSEAGDSEE) the composition is skewed to acidic residues.

The protein belongs to the bacterial ribosomal protein bS6 family.

Its function is as follows. Binds together with bS18 to 16S ribosomal RNA. The sequence is that of Small ribosomal subunit protein bS6 from Yersinia enterocolitica serotype O:8 / biotype 1B (strain NCTC 13174 / 8081).